The following is a 320-amino-acid chain: ATP-dependent 6-phosphofructokinase (320 aa).

Residue Gly12 participates in ATP binding. 22–26 (RGVVR) is a binding site for ADP. ATP contacts are provided by residues 73 to 74 (RF) and 103 to 106 (GDGS). Residue Asp104 coordinates Mg(2+). 126-128 (TID) serves as a coordination point for substrate. Asp128 acts as the Proton acceptor in catalysis. Position 155 (Arg155) interacts with ADP. Residues Arg163 and 170 to 172 (MGR) each bind substrate. Residues 186–188 (GCE), Lys212, and 214–216 (KKH) contribute to the ADP site. Substrate-binding positions include Glu223, Arg244, and 250–253 (HIQR).

Belongs to the phosphofructokinase type A (PFKA) family. ATP-dependent PFK group I subfamily. Prokaryotic clade 'B1' sub-subfamily. Homotetramer. Requires Mg(2+) as cofactor.

The protein resides in the cytoplasm. The catalysed reaction is beta-D-fructose 6-phosphate + ATP = beta-D-fructose 1,6-bisphosphate + ADP + H(+). It functions in the pathway carbohydrate degradation; glycolysis; D-glyceraldehyde 3-phosphate and glycerone phosphate from D-glucose: step 3/4. Allosterically activated by ADP and other diphosphonucleosides, and allosterically inhibited by phosphoenolpyruvate. In terms of biological role, catalyzes the phosphorylation of D-fructose 6-phosphate to fructose 1,6-bisphosphate by ATP, the first committing step of glycolysis. This Vibrio cholerae serotype O1 (strain ATCC 39315 / El Tor Inaba N16961) protein is ATP-dependent 6-phosphofructokinase.